A 107-amino-acid polypeptide reads, in one-letter code: Putative double-stranded DNA mimic protein HS_0995 (107 aa).

It belongs to the putative dsDNA mimic protein family.

Its function is as follows. May act as a double-stranded DNA (dsDNA) mimic. Probably regulates the activity of a dsDNA-binding protein. The chain is Putative double-stranded DNA mimic protein HS_0995 from Histophilus somni (strain 129Pt) (Haemophilus somnus).